A 372-amino-acid polypeptide reads, in one-letter code: Non-structural protein NS2 (372 aa).

The tract at residues 259 to 326 is disordered; the sequence is NQIEKQHTTH…QESEPESPSF (68 aa). Low complexity predominate over residues 299 to 309; sequence TETTSTSSSHH.

The polypeptide is Non-structural protein NS2 (NS) (Aedes albopictus (Asian tiger mosquito)).